The primary structure comprises 318 residues: Sucrose operon repressor (318 aa).

One can recognise an HTH lacI-type domain in the interval 1-56; that stretch reads MIKLEDVANKAGVSVTTVSRVINRKGYLSDATISKVEKAMQDLHYIPNAAARSLQG. Positions 4–23 form a DNA-binding region, H-T-H motif; sequence LEDVANKAGVSVTTVSRVIN.

Functionally, this protein may control the expression of the genes that are involved in the transport and catabolism of sucrose. The protein is Sucrose operon repressor (sacR) of Lactococcus lactis subsp. lactis (Streptococcus lactis).